A 542-amino-acid polypeptide reads, in one-letter code: CTP synthase (542 aa).

An amidoligase domain region spans residues 1 to 265 (MTRYVFITGG…DREILAHFQM (265 aa)). Ser13 serves as a coordination point for CTP. A UTP-binding site is contributed by Ser13. Residues 14 to 19 (SLGKGL) and Asp71 each bind ATP. The Mg(2+) site is built by Asp71 and Glu139. Residues 146 to 148 (DIE), 186 to 191 (KTKPTQ), and Lys222 each bind CTP. Residues 186–191 (KTKPTQ) and Lys222 each bind UTP. 238-240 (RDV) is an ATP binding site. One can recognise a Glutamine amidotransferase type-1 domain in the interval 291 to 541 (TIAIVGKYTG…IAAAIDQSRL (251 aa)). Residue Gly353 coordinates L-glutamine. The active-site Nucleophile; for glutamine hydrolysis is the Cys380. L-glutamine is bound by residues 381 to 384 (FGMQ), Glu404, and Arg469. Active-site residues include His514 and Glu516.

Belongs to the CTP synthase family. In terms of assembly, homotetramer.

The enzyme catalyses UTP + L-glutamine + ATP + H2O = CTP + L-glutamate + ADP + phosphate + 2 H(+). It catalyses the reaction L-glutamine + H2O = L-glutamate + NH4(+). The catalysed reaction is UTP + NH4(+) + ATP = CTP + ADP + phosphate + 2 H(+). It functions in the pathway pyrimidine metabolism; CTP biosynthesis via de novo pathway; CTP from UDP: step 2/2. Its activity is regulated as follows. Allosterically activated by GTP, when glutamine is the substrate; GTP has no effect on the reaction when ammonia is the substrate. The allosteric effector GTP functions by stabilizing the protein conformation that binds the tetrahedral intermediate(s) formed during glutamine hydrolysis. Inhibited by the product CTP, via allosteric rather than competitive inhibition. Functionally, catalyzes the ATP-dependent amination of UTP to CTP with either L-glutamine or ammonia as the source of nitrogen. Regulates intracellular CTP levels through interactions with the four ribonucleotide triphosphates. This chain is CTP synthase, found in Methylorubrum extorquens (strain CM4 / NCIMB 13688) (Methylobacterium extorquens).